Here is a 273-residue protein sequence, read N- to C-terminus: Nitrogenase iron protein (273 aa).

An ATP-binding site is contributed by 8–15 (GKGGIGKS). Cys94 contacts [4Fe-4S] cluster. Residue Arg97 is modified to ADP-ribosylarginine; by dinitrogenase reductase ADP-ribosyltransferase. Cys130 provides a ligand contact to [4Fe-4S] cluster.

It belongs to the NifH/BchL/ChlL family. In terms of assembly, homodimer. The cofactor is [4Fe-4S] cluster. In terms of processing, the reversible ADP-ribosylation of Arg-97 inactivates the nitrogenase reductase and regulates nitrogenase activity.

The catalysed reaction is N2 + 8 reduced [2Fe-2S]-[ferredoxin] + 16 ATP + 16 H2O = H2 + 8 oxidized [2Fe-2S]-[ferredoxin] + 2 NH4(+) + 16 ADP + 16 phosphate + 6 H(+). Functionally, the key enzymatic reactions in nitrogen fixation are catalyzed by the nitrogenase complex, which has 2 components: the iron protein and the molybdenum-iron protein. This chain is Nitrogenase iron protein, found in Desulforapulum autotrophicum (strain ATCC 43914 / DSM 3382 / VKM B-1955 / HRM2) (Desulfobacterium autotrophicum).